Consider the following 106-residue polypeptide: Large ribosomal subunit protein bL21 (106 aa).

This sequence belongs to the bacterial ribosomal protein bL21 family. Part of the 50S ribosomal subunit. Contacts protein L20.

In terms of biological role, this protein binds to 23S rRNA in the presence of protein L20. The polypeptide is Large ribosomal subunit protein bL21 (Syntrophobacter fumaroxidans (strain DSM 10017 / MPOB)).